The primary structure comprises 190 residues: FPAMPLSNLFANAVLRAQHLYLLAAETYKEFERSYIPEEQRHSNKNSQSAFCYSETIPAPTGKDDAQQKSDMELLRFSLVLVQSWLNPVQFLSRVFTNSLVFGTSDRVFEKLRDLEEGIQALMRELEDGSHRGPQILKPTYEKFDINLRNEDALLKNYGLLSCFKKDLHKVETYLKLMKCRRFGESNCSI.

Zn(2+) is bound at residue histidine 19. Cysteine 52 and cysteine 163 are oxidised to a cystine. Glutamate 172 contacts Zn(2+). Cysteines 180 and 188 form a disulfide.

The protein belongs to the somatotropin/prolactin family.

The protein resides in the secreted. Functionally, growth hormone plays an important role in growth control and involved in the regulation of several anabolic processes. This chain is Somatotropin (GH), found in Crocodylus novaeguineae (Crocodile).